A 566-amino-acid polypeptide reads, in one-letter code: MEYWHYVETTSSGQPLLREGEKDIFIDQSVGLYHGKSKILQRQRGRIFLTSQRIIYIDDAKPTQNSLGLELDDLAYVNYSSGFLTRSPRLILFFKDPSSKDELGKSAETASADVVSTWVCPICMVSNETQGEFTKDTLPTPICINCGVPADYELTKSSINCSNAIDPNANPQNQFGVNSENICPACTFANHPQIGNCEICGHRLPNASKVRSKLNRLNFHDSRVHIELEKNSLARNKSSHSALSSSSSTGSSTEFVQLSFRKSDGVLFSQATERALENILTEKNKHIFNQNVVSVNGVDMRKGASSHEYNNEVPFIETKLSRIGISSLEKSRENQLLNNDILFNNALTDLNKLMSLATSIERLYKNSNITMKTKTLNLQDESTVNEPKTRRPLLILDREKFLNKELFLDEIAREIYEFTLSEFKDLNSDTNYMIITLVDLYAMYNKSMRIGTGLISPMEMREACERFEHLGLNELKLVKVNKRILCVTSEKFDVVKEKLVDLIGDNPGSDLLRLTQILSSNNSKSNWTLGILMEVLQNCVDEGDLLIDKQLSGIYYYKNSYWPSHI.

In terms of domain architecture, GLUE N-terminal spans 7 to 96 (VETTSSGQPL…SPRLILFFKD (90 aa)). The RanBP2-type 1; degenerate zinc-finger motif lies at 114–151 (VVSTWVCPICMVSNETQGEFTKDTLPTPICINCGVPAD). The RanBP2-type 2 zinc finger occupies 177 to 205 (VNSENICPACTFANHPQIGNCEICGHRLP). Residues 255–288 (FVQLSFRKSDGVLFSQATERALENILTEKNKHIF) enclose the GLUE C-terminal domain.

This sequence belongs to the VPS36 family. In terms of assembly, component of the endosomal sorting required for transport complex II (ESCRT-II), which consists of 2 copies of VPS25, 1 copy of SNF8, and 1 copy of VPS36. The ESCRT-II complex interacts directly with the VPS20 subunit of the ESCRT-III complex. Binds ubiquitin.

It is found in the cytoplasm. The protein resides in the endosome membrane. Its function is as follows. Component of the ESCRT-II complex, which is required for multivesicular body (MVB) formation and sorting of endosomal cargo proteins into MVBs. The MVB pathway mediates delivery of transmembrane proteins into the lumen of the lysosome for degradation. The ESCRT-II complex is probably involved in the recruitment of the ESCRT-III complex. Involved in the trafficking of the plasma membrane ATPase. Its ability to bind ubiquitin plays a central role in endosomal sorting of ubiquitinated cargo proteins by the ESCRT complexes. The protein is Vacuolar protein-sorting-associated protein 36 (VPS36) of Saccharomyces cerevisiae (strain ATCC 204508 / S288c) (Baker's yeast).